The following is a 311-amino-acid chain: UDP-N-acetylenolpyruvoylglucosamine reductase (311 aa).

One can recognise an FAD-binding PCMH-type domain in the interval 28–197; sequence KIGGNARWLV…VSARFHLARG (170 aa). The active site involves Arg177. The active-site Proton donor is the Ser226. Glu296 is an active-site residue.

This sequence belongs to the MurB family. It depends on FAD as a cofactor.

The protein localises to the cytoplasm. It catalyses the reaction UDP-N-acetyl-alpha-D-muramate + NADP(+) = UDP-N-acetyl-3-O-(1-carboxyvinyl)-alpha-D-glucosamine + NADPH + H(+). Its pathway is cell wall biogenesis; peptidoglycan biosynthesis. In terms of biological role, cell wall formation. The sequence is that of UDP-N-acetylenolpyruvoylglucosamine reductase from Magnetococcus marinus (strain ATCC BAA-1437 / JCM 17883 / MC-1).